Reading from the N-terminus, the 523-residue chain is Alanine aminotransferase 2 (523 aa).

A disordered region spans residues 1–25; the sequence is MQRAAALVRRGCGPRTPSSWGRSQS. 5 residues coordinate pyridoxal 5'-phosphate: Ala187, Ser188, Tyr216, Asn271, and Ser338. An N6-(pyridoxal phosphate)lysine modification is found at Lys341. Arg350 lines the pyridoxal 5'-phosphate pocket. 3 positions are modified to N6-acetyllysine: Lys415, Lys505, and Lys512.

The protein belongs to the class-I pyridoxal-phosphate-dependent aminotransferase family. Alanine aminotransferase subfamily. As to quaternary structure, homodimer. The cofactor is pyridoxal 5'-phosphate. Expressed at high levels in muscle, adipose tissue, kidney and brain and at lower levels in the liver and breast.

It catalyses the reaction L-alanine + 2-oxoglutarate = pyruvate + L-glutamate. Its pathway is amino-acid degradation; L-alanine degradation via transaminase pathway; pyruvate from L-alanine: step 1/1. In terms of biological role, catalyzes the reversible transamination between alanine and 2-oxoglutarate to form pyruvate and glutamate. The sequence is that of Alanine aminotransferase 2 (GPT2) from Homo sapiens (Human).